Consider the following 81-residue polypeptide: Cytochrome b559 subunit alpha (81 aa).

A helical membrane pass occupies residues 22 to 36 (VIHSITIPSLFIAGW). His24 is a binding site for heme.

It belongs to the PsbE/PsbF family. As to quaternary structure, heterodimer of an alpha subunit and a beta subunit. PSII is composed of 1 copy each of membrane proteins PsbA, PsbB, PsbC, PsbD, PsbE, PsbF, PsbH, PsbI, PsbJ, PsbK, PsbL, PsbM, PsbT, PsbX, PsbY, PsbZ, Psb30/Ycf12, at least 3 peripheral proteins of the oxygen-evolving complex and a large number of cofactors. It forms dimeric complexes. It depends on heme b as a cofactor.

It is found in the plastid. The protein resides in the chloroplast thylakoid membrane. Functionally, this b-type cytochrome is tightly associated with the reaction center of photosystem II (PSII). PSII is a light-driven water:plastoquinone oxidoreductase that uses light energy to abstract electrons from H(2)O, generating O(2) and a proton gradient subsequently used for ATP formation. It consists of a core antenna complex that captures photons, and an electron transfer chain that converts photonic excitation into a charge separation. The sequence is that of Cytochrome b559 subunit alpha from Cyanidioschyzon merolae (strain NIES-3377 / 10D) (Unicellular red alga).